The primary structure comprises 353 residues: Photosystem II D2 protein (353 aa).

Thr-2 bears the N-acetylthreonine mark. Thr-2 carries the phosphothreonine modification. The chain crosses the membrane as a helical span at residues 41–61; that stretch reads CAYFAVGGWFTGTTFVTSWYT. A chlorophyll a-binding site is contributed by His-118. A helical transmembrane segment spans residues 125-141; sequence GFMLRQFELARSVQLRP. Residues Gln-130 and Asn-143 each contribute to the pheophytin a site. A helical membrane pass occupies residues 153–166; sequence VFVSVFLIYPLGQS. His-198 serves as a coordination point for chlorophyll a. The helical transmembrane segment at 208–228 threads the bilayer; it reads AALLCAIHGATVENTLFEDGD. A plastoquinone is bound by residues His-215 and Phe-262. His-215 is a binding site for Fe cation. His-269 provides a ligand contact to Fe cation. Residues 279–295 traverse the membrane as a helical segment; sequence GLWMSALGVVGLALNLR.

This sequence belongs to the reaction center PufL/M/PsbA/D family. As to quaternary structure, PSII is composed of 1 copy each of membrane proteins PsbA, PsbB, PsbC, PsbD, PsbE, PsbF, PsbH, PsbI, PsbJ, PsbK, PsbL, PsbM, PsbT, PsbX, PsbY, PsbZ, Psb30/Ycf12, at least 3 peripheral proteins of the oxygen-evolving complex and a large number of cofactors. It forms dimeric complexes. The D1/D2 heterodimer binds P680, chlorophylls that are the primary electron donor of PSII, and subsequent electron acceptors. It shares a non-heme iron and each subunit binds pheophytin, quinone, additional chlorophylls, carotenoids and lipids. There is also a Cl(-1) ion associated with D1 and D2, which is required for oxygen evolution. The PSII complex binds additional chlorophylls, carotenoids and specific lipids. is required as a cofactor.

It is found in the plastid. The protein resides in the chloroplast thylakoid membrane. The catalysed reaction is 2 a plastoquinone + 4 hnu + 2 H2O = 2 a plastoquinol + O2. Photosystem II (PSII) is a light-driven water:plastoquinone oxidoreductase that uses light energy to abstract electrons from H(2)O, generating O(2) and a proton gradient subsequently used for ATP formation. It consists of a core antenna complex that captures photons, and an electron transfer chain that converts photonic excitation into a charge separation. The D1/D2 (PsbA/PsbD) reaction center heterodimer binds P680, the primary electron donor of PSII as well as several subsequent electron acceptors. D2 is needed for assembly of a stable PSII complex. This Jasminum nudiflorum (Winter jasmine) protein is Photosystem II D2 protein.